The sequence spans 2380 residues: DNA polymerase epsilon catalytic subunit A (2380 aa).

The segment covering 169–196 (YYNKGNNNNNNHQNYNNNNNQNNNNFNK) has biased composition (low complexity). Disordered stretches follow at residues 169-209 (YYNK…NNSK), 1178-1210 (FFEK…QQTD), 1766-1787 (KNTS…NDTT), 1967-1998 (QQQQ…KNKK), and 2059-2120 (KIST…TTTS). A compositionally biased stretch (acidic residues) spans 1183–1201 (EDNDQDNDNDNDNDNDNDN). Positions 1767-1776 (NTSNNSNTKN) are enriched in low complexity. Residues 1777–1787 (GANQNTTNDTT) show a composition bias toward polar residues. A compositionally biased stretch (acidic residues) spans 1975–1991 (NADDDDDDDVSENEEEQ). 2 stretches are compositionally biased toward low complexity: residues 2059–2081 (KIST…TTKD) and 2110–2120 (SSSSSTTTTTS). Zn(2+) contacts are provided by cysteine 2225 and cysteine 2228. The CysA-type zinc finger occupies 2225 to 2288 (CSSCHSCRDI…RVPELSCIQC (64 aa)). Positions 2245-2258 (ISSRLSSQQKSNNN) are enriched in low complexity. Positions 2245 to 2275 (ISSRLSSQQKSNNNDSDDSDDDNEENEGDDD) are disordered. The segment covering 2259-2275 (DSDDSDDDNEENEGDDD) has biased composition (acidic residues). 2 residues coordinate Zn(2+): cysteine 2285 and cysteine 2288. [4Fe-4S] cluster is bound by residues cysteine 2319, cysteine 2322, cysteine 2334, and cysteine 2337. The CysB motif motif lies at 2319–2337 (CSKCNDVKSDNLGDICPQC).

This sequence belongs to the DNA polymerase type-B family. As to quaternary structure, consists of three subunits: pole, pole2 and pole3. It depends on [4Fe-4S] cluster as a cofactor.

It is found in the nucleus. It carries out the reaction DNA(n) + a 2'-deoxyribonucleoside 5'-triphosphate = DNA(n+1) + diphosphate. Its function is as follows. DNA polymerase II participates in chromosomal DNA replication. The protein is DNA polymerase epsilon catalytic subunit A (pole) of Dictyostelium discoideum (Social amoeba).